Reading from the N-terminus, the 334-residue chain is MNEDLKVNLSGLPRDYLDAAAAENISAAVSSRVPAVEPEPELVVNPWDIVLCTSGTLISCENAIVVLIIFHNPSLRAPMFLLIGSLALADLLAGIGLITNFVFAYLLQSEATKLVTIGLIVASFSASVCSLLAITVDRYLSLYYALTYHSERTVTFTYVMLVMLWGTSICLGLLPVMGWNCLRDESTCSVVRPLTKNNAAILSVSFLFMFALMLQLYIQICKIVMRHAHQIALQHHFLATSHYVTTRKGVSTLAIILGTFAACWMPFTLYSLIADYTYPSIYTYATLLPATYNSIINPVIYAFRNQEIQKALCLICCGCIPSSLAQRARSPSDV.

Residues 1–48 (MNEDLKVNLSGLPRDYLDAAAAENISAAVSSRVPAVEPEPELVVNPWD) are Extracellular-facing. Residues Asn-8 and Asn-24 are each glycosylated (N-linked (GlcNAc...) asparagine). The chain crosses the membrane as a helical span at residues 49–69 (IVLCTSGTLISCENAIVVLII). Residues 70-77 (FHNPSLRA) are Cytoplasmic-facing. The chain crosses the membrane as a helical span at residues 78–98 (PMFLLIGSLALADLLAGIGLI). Topologically, residues 99–113 (TNFVFAYLLQSEATK) are extracellular. The chain crosses the membrane as a helical span at residues 114 to 134 (LVTIGLIVASFSASVCSLLAI). The Cytoplasmic portion of the chain corresponds to 135–158 (TVDRYLSLYYALTYHSERTVTFTY). Residues 159–179 (VMLVMLWGTSICLGLLPVMGW) form a helical membrane-spanning segment. Residues 180–199 (NCLRDESTCSVVRPLTKNNA) are Extracellular-facing. The helical transmembrane segment at 200–220 (AILSVSFLFMFALMLQLYIQI) threads the bilayer. The Cytoplasmic portion of the chain corresponds to 221–252 (CKIVMRHAHQIALQHHFLATSHYVTTRKGVST). Residues 253-273 (LAIILGTFAACWMPFTLYSLI) traverse the membrane as a helical segment. The Extracellular segment spans residues 274 to 282 (ADYTYPSIY). Residues 283–303 (TYATLLPATYNSIINPVIYAF) form a helical membrane-spanning segment. Over 304–334 (RNQEIQKALCLICCGCIPSSLAQRARSPSDV) the chain is Cytoplasmic. Residue Cys-317 is the site of S-palmitoyl cysteine attachment. Residues Ser-330 and Ser-332 each carry the phosphoserine modification.

Belongs to the G-protein coupled receptor 1 family.

It is found in the cell membrane. Its function is as follows. Promotes neurite outgrowth and blocks myelin inhibition in neurons. Receptor with constitutive G(s) signaling activity that stimulates cyclic AMP production. This is G-protein coupled receptor 12 (GPR12) from Homo sapiens (Human).